Here is a 533-residue protein sequence, read N- to C-terminus: Probable nucleolar protein 5-1 (533 aa).

The region spanning 280–398 (IAPNLTALVG…LEARLRTLEG (119 aa)) is the Nop domain. Residues 402–533 (GRLSGSAKGK…EKKKKKKTEV (132 aa)) are disordered. A compositionally biased stretch (basic and acidic residues) spans 412-423 (PKIEVYDKDKKK). Residues 433 to 450 (KTYNTAADSLLQTPTVDS) show a composition bias toward polar residues. Basic and acidic residues-rich tracts occupy residues 474–489 (TEEPSKKKSNKKKTEA) and 515–524 (MPAKKKEKSE).

It belongs to the NOP5/NOP56 family.

It localises to the nucleus. Its subcellular location is the nucleolus. Functionally, required for 60S ribosomal subunit biogenesis. The polypeptide is Probable nucleolar protein 5-1 (NOP5-1) (Arabidopsis thaliana (Mouse-ear cress)).